Here is a 329-residue protein sequence, read N- to C-terminus: Glycerol-3-phosphate dehydrogenase [NAD(P)+] (329 aa).

Residues Tyr14, Arg34, and Lys108 each coordinate NADPH. Sn-glycerol 3-phosphate contacts are provided by Lys108, Gly137, and Ser139. Residue Ala141 coordinates NADPH. The sn-glycerol 3-phosphate site is built by Lys192, Asp245, Ser255, Arg256, and Asn257. Lys192 acts as the Proton acceptor in catalysis. NADPH is bound at residue Arg256. NADPH is bound by residues Ile280 and Glu282.

Belongs to the NAD-dependent glycerol-3-phosphate dehydrogenase family.

It is found in the cytoplasm. It carries out the reaction sn-glycerol 3-phosphate + NAD(+) = dihydroxyacetone phosphate + NADH + H(+). The enzyme catalyses sn-glycerol 3-phosphate + NADP(+) = dihydroxyacetone phosphate + NADPH + H(+). Its pathway is membrane lipid metabolism; glycerophospholipid metabolism. In terms of biological role, catalyzes the reduction of the glycolytic intermediate dihydroxyacetone phosphate (DHAP) to sn-glycerol 3-phosphate (G3P), the key precursor for phospholipid synthesis. The polypeptide is Glycerol-3-phosphate dehydrogenase [NAD(P)+] (Wigglesworthia glossinidia brevipalpis).